Reading from the N-terminus, the 164-residue chain is uncharacterized protein (164 aa).

2 helical membrane-spanning segments follow: residues 11–31 (FYVN…PSLL) and 51–71 (CQQY…LVLV).

It localises to the membrane. This is an uncharacterized protein from Saccharomyces cerevisiae (strain ATCC 204508 / S288c) (Baker's yeast).